The following is a 376-amino-acid chain: Putative glutamate--cysteine ligase 2 (376 aa).

This sequence belongs to the glutamate--cysteine ligase type 2 family. YbdK subfamily.

It carries out the reaction L-cysteine + L-glutamate + ATP = gamma-L-glutamyl-L-cysteine + ADP + phosphate + H(+). Functionally, ATP-dependent carboxylate-amine ligase which exhibits weak glutamate--cysteine ligase activity. This is Putative glutamate--cysteine ligase 2 from Mycolicibacterium paratuberculosis (strain ATCC BAA-968 / K-10) (Mycobacterium paratuberculosis).